A 698-amino-acid chain; its full sequence is Vertnin (698 aa).

The protein belongs to the vertnin family.

Its subcellular location is the nucleus. Acts as a transcription factor that regulates development of thoracic vertebrae. In Sus scrofa (Pig), this protein is Vertnin (VRTN).